Reading from the N-terminus, the 359-residue chain is 3-dehydroquinate synthase (359 aa).

Residues 70-75, 104-108, 128-129, K141, and K150 contribute to the NAD(+) site; these read DAEGGK, GAATD, and TT. Positions 183, 246, and 262 each coordinate Zn(2+).

It belongs to the sugar phosphate cyclases superfamily. Dehydroquinate synthase family. Requires Co(2+) as cofactor. Zn(2+) serves as cofactor. It depends on NAD(+) as a cofactor.

It is found in the cytoplasm. It catalyses the reaction 7-phospho-2-dehydro-3-deoxy-D-arabino-heptonate = 3-dehydroquinate + phosphate. Its pathway is metabolic intermediate biosynthesis; chorismate biosynthesis; chorismate from D-erythrose 4-phosphate and phosphoenolpyruvate: step 2/7. Catalyzes the conversion of 3-deoxy-D-arabino-heptulosonate 7-phosphate (DAHP) to dehydroquinate (DHQ). In Mycolicibacterium vanbaalenii (strain DSM 7251 / JCM 13017 / BCRC 16820 / KCTC 9966 / NRRL B-24157 / PYR-1) (Mycobacterium vanbaalenii), this protein is 3-dehydroquinate synthase.